The primary structure comprises 379 residues: Glutamate 5-kinase (379 aa).

Residue K17 participates in ATP binding. Residues S57, D144, and N156 each contribute to the substrate site. ATP is bound at residue 176 to 177 (SD). A PUA domain is found at 282–359 (SGILMIDQGA…EEIESILGYE (78 aa)).

It belongs to the glutamate 5-kinase family.

Its subcellular location is the cytoplasm. It catalyses the reaction L-glutamate + ATP = L-glutamyl 5-phosphate + ADP. It participates in amino-acid biosynthesis; L-proline biosynthesis; L-glutamate 5-semialdehyde from L-glutamate: step 1/2. Its function is as follows. Catalyzes the transfer of a phosphate group to glutamate to form L-glutamate 5-phosphate. The polypeptide is Glutamate 5-kinase (Bartonella henselae (strain ATCC 49882 / DSM 28221 / CCUG 30454 / Houston 1) (Rochalimaea henselae)).